We begin with the raw amino-acid sequence, 130 residues long: Small ribosomal subunit protein uS11c (130 aa).

The protein belongs to the universal ribosomal protein uS11 family. Part of the 30S ribosomal subunit.

Its subcellular location is the plastid. It localises to the cyanelle. This is Small ribosomal subunit protein uS11c from Cyanophora paradoxa.